A 91-amino-acid polypeptide reads, in one-letter code: UPF0358 protein SAB0977 (91 aa).

This sequence belongs to the UPF0358 family.

This Staphylococcus aureus (strain bovine RF122 / ET3-1) protein is UPF0358 protein SAB0977.